The sequence spans 515 residues: 1-pyrroline-5-carboxylate dehydrogenase (515 aa).

Residues Glu-286 and Cys-320 contribute to the active site.

Belongs to the aldehyde dehydrogenase family. RocA subfamily.

The enzyme catalyses L-glutamate 5-semialdehyde + NAD(+) + H2O = L-glutamate + NADH + 2 H(+). It functions in the pathway amino-acid degradation; L-proline degradation into L-glutamate; L-glutamate from L-proline: step 2/2. In Geobacillus kaustophilus (strain HTA426), this protein is 1-pyrroline-5-carboxylate dehydrogenase.